A 943-amino-acid chain; its full sequence is Isoleucine--tRNA ligase (943 aa).

The 'HIGH' region motif lies at 58–68; the sequence is PYANGSIHIGH. Glu-567 provides a ligand contact to L-isoleucyl-5'-AMP. Positions 608 to 612 match the 'KMSKS' region motif; the sequence is KMSKS. Residue Lys-611 coordinates ATP. The Zn(2+) site is built by Cys-906, Cys-909, Cys-926, and Cys-929.

It belongs to the class-I aminoacyl-tRNA synthetase family. IleS type 1 subfamily. As to quaternary structure, monomer. The cofactor is Zn(2+).

It localises to the cytoplasm. The enzyme catalyses tRNA(Ile) + L-isoleucine + ATP = L-isoleucyl-tRNA(Ile) + AMP + diphosphate. Its function is as follows. Catalyzes the attachment of isoleucine to tRNA(Ile). As IleRS can inadvertently accommodate and process structurally similar amino acids such as valine, to avoid such errors it has two additional distinct tRNA(Ile)-dependent editing activities. One activity is designated as 'pretransfer' editing and involves the hydrolysis of activated Val-AMP. The other activity is designated 'posttransfer' editing and involves deacylation of mischarged Val-tRNA(Ile). This chain is Isoleucine--tRNA ligase, found in Pseudomonas fluorescens (strain ATCC BAA-477 / NRRL B-23932 / Pf-5).